Here is a 1293-residue protein sequence, read N- to C-terminus: Phosphoribosylformylglycinamidine synthase (1293 aa).

Residues 305–316 (GAATGSGGEIRD), 384–386 (TGY), and A676 each bind ATP. A disordered region spans residues 307 to 326 (ATGSGGEIRDEGATGRGSKP). Residues D677, E716, N720, and D884 each coordinate Mg(2+). ATP is bound at residue S886. A Glutamine amidotransferase type-1 domain is found at 1040-1293 (MAILREQGVN…MFRNARVKIG (254 aa)). Residue C1133 is the Nucleophile of the active site. Catalysis depends on residues H1258 and E1260.

It in the N-terminal section; belongs to the FGAMS family. Monomer.

Its subcellular location is the cytoplasm. The enzyme catalyses N(2)-formyl-N(1)-(5-phospho-beta-D-ribosyl)glycinamide + L-glutamine + ATP + H2O = 2-formamido-N(1)-(5-O-phospho-beta-D-ribosyl)acetamidine + L-glutamate + ADP + phosphate + H(+). It functions in the pathway purine metabolism; IMP biosynthesis via de novo pathway; 5-amino-1-(5-phospho-D-ribosyl)imidazole from N(2)-formyl-N(1)-(5-phospho-D-ribosyl)glycinamide: step 1/2. In terms of biological role, phosphoribosylformylglycinamidine synthase involved in the purines biosynthetic pathway. Catalyzes the ATP-dependent conversion of formylglycinamide ribonucleotide (FGAR) and glutamine to yield formylglycinamidine ribonucleotide (FGAM) and glutamate. This chain is Phosphoribosylformylglycinamidine synthase, found in Shewanella frigidimarina (strain NCIMB 400).